The following is a 439-amino-acid chain: 26S proteasome regulatory subunit 6A (439 aa).

Met-1 carries the N-acetylmethionine modification. Ser-9 carries the post-translational modification Phosphoserine. 227–234 (GPPGTGKT) is a binding site for ATP. Ser-376 bears the Phosphoserine mark.

The protein belongs to the AAA ATPase family. As to quaternary structure, component of the 19S proteasome regulatory particle complex. The 26S proteasome consists of a 20S core particle (CP) and two 19S regulatory subunits (RP). The regulatory particle is made of a lid composed of 9 subunits, a base containing 6 ATPases including PSMC3 and few additional components. Interacts with PAAF1. In terms of assembly, (Microbial infection) Interacts with HIV-1 Tat. In terms of processing, sumoylated by UBE2I in response to MEKK1-mediated stimuli.

It localises to the cytoplasm. The protein localises to the nucleus. Its function is as follows. Component of the 26S proteasome, a multiprotein complex involved in the ATP-dependent degradation of ubiquitinated proteins. This complex plays a key role in the maintenance of protein homeostasis by removing misfolded or damaged proteins, which could impair cellular functions, and by removing proteins whose functions are no longer required. Therefore, the proteasome participates in numerous cellular processes, including cell cycle progression, apoptosis, or DNA damage repair. PSMC3 belongs to the heterohexameric ring of AAA (ATPases associated with diverse cellular activities) proteins that unfolds ubiquitinated target proteins that are concurrently translocated into a proteolytic chamber and degraded into peptides. The polypeptide is 26S proteasome regulatory subunit 6A (PSMC3) (Homo sapiens (Human)).